The chain runs to 457 residues: Argininosuccinate lyase (457 aa).

This sequence belongs to the lyase 1 family. Argininosuccinate lyase subfamily.

The protein localises to the cytoplasm. It catalyses the reaction 2-(N(omega)-L-arginino)succinate = fumarate + L-arginine. The protein operates within amino-acid biosynthesis; L-arginine biosynthesis; L-arginine from L-ornithine and carbamoyl phosphate: step 3/3. The chain is Argininosuccinate lyase from Haemophilus influenzae (strain ATCC 51907 / DSM 11121 / KW20 / Rd).